We begin with the raw amino-acid sequence, 521 residues long: Calcium-dependent protein kinase 33 (521 aa).

Residue Gly-2 is the site of N-myristoyl glycine attachment. The tract at residues 15–56 is disordered; sequence PQQNGERSVEIENRRRSTHQDPSKISTGTNQPPPWRNPAKHS. Over residues 21–36 the composition is skewed to basic and acidic residues; the sequence is RSVEIENRRRSTHQDP. Positions 73–331 constitute a Protein kinase domain; that stretch reads YTLSKELGRG…AAEVLKHPWL (259 aa). Residues 79–87 and Lys-102 contribute to the ATP site; that span reads LGRGQFGVT. Asp-197 functions as the Proton acceptor in the catalytic mechanism. Ser-237 is subject to Phosphoserine. The tract at residues 337 to 367 is autoinhibitory domain; the sequence is ASDKPIDSAVLSRMKQFRAMNKLKKLALKVI. EF-hand domains lie at 374–409, 410–445, 446–481, and 482–516; these read EEIQ…LGSR, LTEA…RHRL, ESNE…YGMG, and DDAT…GNPQ. 20 residues coordinate Ca(2+): Asp-387, Asp-389, Ser-391, Thr-393, Glu-398, Asp-423, Asp-425, Asn-427, Ser-429, Glu-434, Asp-459, Asp-461, Ser-463, Tyr-465, Glu-470, Asp-494, Asp-496, Asp-498, Arg-500, and Glu-505.

Belongs to the protein kinase superfamily. Ser/Thr protein kinase family. CDPK subfamily. As to quaternary structure, interacts with THI1. Interacts with FD and FDP. Autophosphorylated. In terms of tissue distribution, expressed in primary roots, leaves, inflorescences, siliques and guard cells. Expressed in the shoot apical meristem.

It localises to the cell membrane. The protein resides in the nucleus. Its subcellular location is the cytoplasm. It catalyses the reaction L-seryl-[protein] + ATP = O-phospho-L-seryl-[protein] + ADP + H(+). The enzyme catalyses L-threonyl-[protein] + ATP = O-phospho-L-threonyl-[protein] + ADP + H(+). Its activity is regulated as follows. Activated by calcium. Autophosphorylation may play an important role in the regulation of the kinase activity. Repressed by THI1 through a negative regulation of the autophosphorylation activity in the presence of Ca(2+). Ca(2+)-dependent protein kinase. Negative regulator of stomatal closure and slow anion currents. Unable to phosphorylate THI1 in vitro, but the kinase activity is essential for the stomatal closure regulation. Phosphorylates FD. May play a role in signal transduction pathways that involve calcium as a second messenger. The sequence is that of Calcium-dependent protein kinase 33 from Arabidopsis thaliana (Mouse-ear cress).